Here is a 211-residue protein sequence, read N- to C-terminus: Thymidylate kinase (211 aa).

10-17 (GVEGCGKT) is a binding site for ATP.

This sequence belongs to the thymidylate kinase family.

The enzyme catalyses dTMP + ATP = dTDP + ADP. Its function is as follows. Phosphorylation of dTMP to form dTDP in both de novo and salvage pathways of dTTP synthesis. This is Thymidylate kinase from Trichormus variabilis (strain ATCC 29413 / PCC 7937) (Anabaena variabilis).